We begin with the raw amino-acid sequence, 238 residues long: tRNA (guanine-N(7)-)-methyltransferase (238 aa).

Residues Glu68, Glu93, Asp120, and Asp143 each contribute to the S-adenosyl-L-methionine site. The active site involves Asp143. Substrate-binding positions include Lys147, Asp179, and 216–219 (TKFE).

It belongs to the class I-like SAM-binding methyltransferase superfamily. TrmB family.

The catalysed reaction is guanosine(46) in tRNA + S-adenosyl-L-methionine = N(7)-methylguanosine(46) in tRNA + S-adenosyl-L-homocysteine. Its pathway is tRNA modification; N(7)-methylguanine-tRNA biosynthesis. Its function is as follows. Catalyzes the formation of N(7)-methylguanine at position 46 (m7G46) in tRNA. This chain is tRNA (guanine-N(7)-)-methyltransferase, found in Stutzerimonas stutzeri (strain A1501) (Pseudomonas stutzeri).